A 285-amino-acid polypeptide reads, in one-letter code: Nucleotide-binding protein PFL_0912 (285 aa).

8–15 (GRSGSGKS) contacts ATP. 60–63 (DARN) contributes to the GTP binding site.

The protein belongs to the RapZ-like family.

In terms of biological role, displays ATPase and GTPase activities. The polypeptide is Nucleotide-binding protein PFL_0912 (Pseudomonas fluorescens (strain ATCC BAA-477 / NRRL B-23932 / Pf-5)).